Consider the following 198-residue polypeptide: Na(+)-translocating NADH-quinone reductase subunit E (198 aa).

6 helical membrane-spanning segments follow: residues 11-31, 39-59, 77-97, 110-130, 140-160, and 176-196; these read SIFI…FLAV, FGLG…NNLV, FLNF…LEMI, GIFL…SFMV, IVYG…LAGI, and LGIT…FSGV.

This sequence belongs to the NqrDE/RnfAE family. As to quaternary structure, composed of six subunits; NqrA, NqrB, NqrC, NqrD, NqrE and NqrF.

It localises to the cell inner membrane. It catalyses the reaction a ubiquinone + n Na(+)(in) + NADH + H(+) = a ubiquinol + n Na(+)(out) + NAD(+). In terms of biological role, NQR complex catalyzes the reduction of ubiquinone-1 to ubiquinol by two successive reactions, coupled with the transport of Na(+) ions from the cytoplasm to the periplasm. NqrA to NqrE are probably involved in the second step, the conversion of ubisemiquinone to ubiquinol. The protein is Na(+)-translocating NADH-quinone reductase subunit E of Photobacterium profundum (strain SS9).